The following is a 212-amino-acid chain: MRVRNKPWAPELIEAHPEKIVEKGQAFKGQWNQRFEKEQPIFIEVGTGKGQFIINMAKKYPQYNFIGIEIQKTVIAIALKNALEEEIPNLQFLYADGAELTDYFEDGEVSKVFLNFSDPWPKTRHEKRRLTFKTFLKVYEQILVKNGEVEFKTDNQGLFEYSLYSLNNYGMTFEGVWLDLHNSEENEDNVETEYEHKFSAKGQPIYKLKAHF.

S-adenosyl-L-methionine-binding residues include E44, E69, D96, and D118. Residue D118 is part of the active site. K122 contributes to the substrate binding site. Residues 124 to 129 (RHEKRR) form an interaction with RNA region. Substrate contacts are provided by residues D154 and 192–195 (TEYE).

The protein belongs to the class I-like SAM-binding methyltransferase superfamily. TrmB family.

The enzyme catalyses guanosine(46) in tRNA + S-adenosyl-L-methionine = N(7)-methylguanosine(46) in tRNA + S-adenosyl-L-homocysteine. The protein operates within tRNA modification; N(7)-methylguanine-tRNA biosynthesis. Functionally, catalyzes the formation of N(7)-methylguanine at position 46 (m7G46) in tRNA. This chain is tRNA (guanine-N(7)-)-methyltransferase, found in Pediococcus pentosaceus (strain ATCC 25745 / CCUG 21536 / LMG 10740 / 183-1w).